The chain runs to 468 residues: Glutamate--tRNA ligase (468 aa).

The 'HIGH' region motif lies at 8–18 (PSPTGFLHVGG). Zn(2+) is bound by residues cysteine 97, cysteine 99, cysteine 124, and aspartate 126. A 'KMSKS' region motif is present at residues 236-240 (KLSKR). Position 239 (lysine 239) interacts with ATP.

Belongs to the class-I aminoacyl-tRNA synthetase family. Glutamate--tRNA ligase type 1 subfamily. As to quaternary structure, monomer. Zn(2+) is required as a cofactor.

The protein localises to the cytoplasm. The catalysed reaction is tRNA(Glu) + L-glutamate + ATP = L-glutamyl-tRNA(Glu) + AMP + diphosphate. Catalyzes the attachment of glutamate to tRNA(Glu) in a two-step reaction: glutamate is first activated by ATP to form Glu-AMP and then transferred to the acceptor end of tRNA(Glu). This is Glutamate--tRNA ligase from Francisella tularensis subsp. tularensis (strain SCHU S4 / Schu 4).